The primary structure comprises 335 residues: Thioredoxin-related transmembrane protein 4 (335 aa).

The first 20 residues, 1 to 20, serve as a signal peptide directing secretion; the sequence is MTGGFCVPVLLAAWLAAAAA. A Thioredoxin domain is found at 26 to 133; it reads AALPAEESRV…YEDLQNYILE (108 aa). Catalysis depends on nucleophile residues C60 and C63. Residues C60 and C63 are joined by a disulfide bond. The helical transmembrane segment at 186 to 206 threads the bilayer; sequence VFFVIATLVFGLFMGLILVVI. The interval 222-316 is disordered; the sequence is CEQEQSTGEA…EDGAHPADTQ (95 aa). The span at 238–280 shows a compositional bias: acidic residues; it reads QDAEEEKDDSNEEENKDSLVDDEEEKEDIGDEDEGEEDEEEDN. A phosphoserine mark is found at S247 and S255. The segment covering 286-298 has biased composition (basic and acidic residues); the sequence is AEERSDTNERAVV.

Its subcellular location is the nucleus inner membrane. It localises to the endoplasmic reticulum membrane. The chain is Thioredoxin-related transmembrane protein 4 (Tmx4) from Mus musculus (Mouse).